Here is a 180-residue protein sequence, read N- to C-terminus: Large ribosomal subunit protein uL5 (180 aa).

It belongs to the universal ribosomal protein uL5 family. In terms of assembly, part of the 50S ribosomal subunit; part of the 5S rRNA/L5/L18/L25 subcomplex. Contacts the 5S rRNA and the P site tRNA. Forms a bridge to the 30S subunit in the 70S ribosome.

In terms of biological role, this is one of the proteins that bind and probably mediate the attachment of the 5S RNA into the large ribosomal subunit, where it forms part of the central protuberance. In the 70S ribosome it contacts protein S13 of the 30S subunit (bridge B1b), connecting the 2 subunits; this bridge is implicated in subunit movement. Contacts the P site tRNA; the 5S rRNA and some of its associated proteins might help stabilize positioning of ribosome-bound tRNAs. In Streptococcus thermophilus (strain ATCC BAA-491 / LMD-9), this protein is Large ribosomal subunit protein uL5.